Reading from the N-terminus, the 131-residue chain is UPF0102 protein YraN (131 aa).

It belongs to the UPF0102 family.

This is UPF0102 protein YraN from Salmonella agona (strain SL483).